Reading from the N-terminus, the 427-residue chain is Bifunctional enzyme MtnB/MtnX (427 aa).

The segment at 1 to 221 (MRKPLIICDF…LEETAEVKEW (221 aa)) is HK-MTPenyl-1-P phosphatase. Positions 222–427 (MSEQKRQELA…KLKALQAYHV (206 aa)) are MTRu-1-P dehydratase. Zn(2+) is bound by residues histidine 317 and histidine 319.

This sequence in the N-terminal section; belongs to the HAD-like hydrolase superfamily. MtnX family. In the C-terminal section; belongs to the aldolase class II family. MtnB subfamily. As to quaternary structure, homotetramer. It depends on Zn(2+) as a cofactor.

The enzyme catalyses 5-(methylsulfanyl)-D-ribulose 1-phosphate = 5-methylsulfanyl-2,3-dioxopentyl phosphate + H2O. It catalyses the reaction 2-hydroxy-5-methylsulfanyl-3-oxopent-1-enyl phosphate + H2O = 1,2-dihydroxy-5-(methylsulfanyl)pent-1-en-3-one + phosphate. It functions in the pathway amino-acid biosynthesis; L-methionine biosynthesis via salvage pathway; L-methionine from S-methyl-5-thio-alpha-D-ribose 1-phosphate: step 2/6. Its pathway is amino-acid biosynthesis; L-methionine biosynthesis via salvage pathway; L-methionine from S-methyl-5-thio-alpha-D-ribose 1-phosphate: step 4/6. Catalyzes the dehydration of methylthioribulose-1-phosphate (MTRu-1-P) into 2,3-diketo-5-methylthiopentyl-1-phosphate (DK-MTP-1-P). Its function is as follows. Dephosphorylates 2-hydroxy-3-keto-5-methylthiopentenyl-1-phosphate (HK-MTPenyl-1-P) yielding 1,2-dihydroxy-3-keto-5-methylthiopentene (DHK-MTPene). This chain is Bifunctional enzyme MtnB/MtnX (mtnB/mtnX), found in Bacillus licheniformis (strain ATCC 14580 / DSM 13 / JCM 2505 / CCUG 7422 / NBRC 12200 / NCIMB 9375 / NCTC 10341 / NRRL NRS-1264 / Gibson 46).